The sequence spans 370 residues: Chaperone protein DnaJ (370 aa).

Residues 6-70 enclose the J domain; sequence DYYEVLGVQR…EKRSMYDRFG (65 aa). A CR-type zinc finger spans residues 128 to 208; that stretch reads GVEKTIEYRR…CRGEGRIRQT (81 aa). Zn(2+) is bound by residues cysteine 141, cysteine 144, cysteine 158, cysteine 161, cysteine 182, cysteine 185, cysteine 196, and cysteine 199. CXXCXGXG motif repeat units lie at residues 141–148, 158–165, 182–189, and 196–203; these read CPACRGSG, CPKCGGLG, CDMCRGEG, and CRECRGEG.

This sequence belongs to the DnaJ family. In terms of assembly, homodimer. Requires Zn(2+) as cofactor.

The protein localises to the cytoplasm. Functionally, participates actively in the response to hyperosmotic and heat shock by preventing the aggregation of stress-denatured proteins and by disaggregating proteins, also in an autonomous, DnaK-independent fashion. Unfolded proteins bind initially to DnaJ; upon interaction with the DnaJ-bound protein, DnaK hydrolyzes its bound ATP, resulting in the formation of a stable complex. GrpE releases ADP from DnaK; ATP binding to DnaK triggers the release of the substrate protein, thus completing the reaction cycle. Several rounds of ATP-dependent interactions between DnaJ, DnaK and GrpE are required for fully efficient folding. Also involved, together with DnaK and GrpE, in the DNA replication of plasmids through activation of initiation proteins. This chain is Chaperone protein DnaJ, found in Roseiflexus castenholzii (strain DSM 13941 / HLO8).